The chain runs to 532 residues: Phosphoenolpyruvate carboxykinase (ATP) (532 aa).

Substrate-binding residues include Arg-60, Tyr-194, and Lys-200. ATP-binding positions include Lys-200, His-219, and 237 to 245; that span reads GLSGTGKTT. The Mn(2+) site is built by Lys-200 and His-219. Mn(2+) is bound at residue Asp-258. 3 residues coordinate ATP: Glu-286, Arg-324, and Thr-449. Arg-324 contacts substrate.

The protein belongs to the phosphoenolpyruvate carboxykinase (ATP) family. Mn(2+) is required as a cofactor.

The protein localises to the cytoplasm. It catalyses the reaction oxaloacetate + ATP = phosphoenolpyruvate + ADP + CO2. Its pathway is carbohydrate biosynthesis; gluconeogenesis. Functionally, involved in the gluconeogenesis. Catalyzes the conversion of oxaloacetate (OAA) to phosphoenolpyruvate (PEP) through direct phosphoryl transfer between the nucleoside triphosphate and OAA. The protein is Phosphoenolpyruvate carboxykinase (ATP) of Ruegeria sp. (strain TM1040) (Silicibacter sp.).